Consider the following 256-residue polypeptide: Imidazole glycerol phosphate synthase subunit HisF (256 aa).

Catalysis depends on residues Asp-12 and Asp-131.

It belongs to the HisA/HisF family. As to quaternary structure, heterodimer of HisH and HisF.

The protein localises to the cytoplasm. The enzyme catalyses 5-[(5-phospho-1-deoxy-D-ribulos-1-ylimino)methylamino]-1-(5-phospho-beta-D-ribosyl)imidazole-4-carboxamide + L-glutamine = D-erythro-1-(imidazol-4-yl)glycerol 3-phosphate + 5-amino-1-(5-phospho-beta-D-ribosyl)imidazole-4-carboxamide + L-glutamate + H(+). It participates in amino-acid biosynthesis; L-histidine biosynthesis; L-histidine from 5-phospho-alpha-D-ribose 1-diphosphate: step 5/9. IGPS catalyzes the conversion of PRFAR and glutamine to IGP, AICAR and glutamate. The HisF subunit catalyzes the cyclization activity that produces IGP and AICAR from PRFAR using the ammonia provided by the HisH subunit. This chain is Imidazole glycerol phosphate synthase subunit HisF, found in Thermobifida fusca (strain YX).